The following is a 554-amino-acid chain: Glutamine--tRNA ligase (554 aa).

A 'HIGH' region motif is present at residues 34–44; that stretch reads PEPNGYLHIGH. Residues 35–37 and 41–47 each bind ATP; these read EPN and HIGHAKS. Residues aspartate 67 and tyrosine 212 each coordinate L-glutamine. Residues threonine 231, 261 to 262, and 269 to 271 each bind ATP; these read RL and MSK. The 'KMSKS' region signature appears at 268–272; it reads VMSKR. An interaction with tRNA region spans residues 317–324; the sequence is TKQDNTIE.

Belongs to the class-I aminoacyl-tRNA synthetase family. Monomer.

Its subcellular location is the cytoplasm. The catalysed reaction is tRNA(Gln) + L-glutamine + ATP = L-glutaminyl-tRNA(Gln) + AMP + diphosphate. This chain is Glutamine--tRNA ligase, found in Escherichia coli O7:K1 (strain IAI39 / ExPEC).